We begin with the raw amino-acid sequence, 107 residues long: Thiosulfate sulfurtransferase GlpE (107 aa).

The region spanning 17-105 (ADDNALLVDI…WRIAFPQQVS (89 aa)) is the Rhodanese domain. The active-site Cysteine persulfide intermediate is Cys-65.

This sequence belongs to the GlpE family.

It localises to the cytoplasm. It catalyses the reaction thiosulfate + hydrogen cyanide = thiocyanate + sulfite + 2 H(+). The catalysed reaction is thiosulfate + [thioredoxin]-dithiol = [thioredoxin]-disulfide + hydrogen sulfide + sulfite + 2 H(+). Functionally, transferase that catalyzes the transfer of sulfur from thiosulfate to thiophilic acceptors such as cyanide or dithiols. May function in a CysM-independent thiosulfate assimilation pathway by catalyzing the conversion of thiosulfate to sulfite, which can then be used for L-cysteine biosynthesis. The polypeptide is Thiosulfate sulfurtransferase GlpE (Erwinia tasmaniensis (strain DSM 17950 / CFBP 7177 / CIP 109463 / NCPPB 4357 / Et1/99)).